The following is a 541-amino-acid chain: Chaperonin GroEL 2 (541 aa).

ATP-binding positions include 29–32, 86–90, Gly-413, 476–478, and Asp-492; these read TLGP, DGTTT, and NAA.

The protein belongs to the chaperonin (HSP60) family. Forms a cylinder of 14 subunits composed of two heptameric rings stacked back-to-back. Interacts with the co-chaperonin GroES.

The protein localises to the secreted. It localises to the capsule. Its subcellular location is the cell surface. It is found in the cell wall. The enzyme catalyses ATP + H2O + a folded polypeptide = ADP + phosphate + an unfolded polypeptide.. Its function is as follows. Together with its co-chaperonin GroES, plays an essential role in assisting protein folding. The GroEL-GroES system forms a nano-cage that allows encapsulation of the non-native substrate proteins and provides a physical environment optimized to promote and accelerate protein folding. In Mycolicibacterium gilvum (strain PYR-GCK) (Mycobacterium gilvum (strain PYR-GCK)), this protein is Chaperonin GroEL 2.